A 325-amino-acid polypeptide reads, in one-letter code: Tartrate-resistant acid phosphatase type 5 (325 aa).

The first 21 residues, 1–21, serve as a signal peptide directing secretion; it reads MDTWTLLLVLHTSLLLPWAEG. N-linked (GlcNAc...) asparagine glycans are attached at residues N116 and N147.

In terms of assembly, exists either as monomer or, after proteolytic processing, as a dimer of two chains linked by disulfide bond(s). Fe cation serves as cofactor.

It localises to the lysosome. The enzyme catalyses a phosphate monoester + H2O = an alcohol + phosphate. The chain is Tartrate-resistant acid phosphatase type 5 (ACP5) from Oryctolagus cuniculus (Rabbit).